Here is a 351-residue protein sequence, read N- to C-terminus: Cyanide hydratase (351 aa).

One can recognise a CN hydrolase domain in the interval 6 to 285; it reads YKAAAVTSEP…DGLLFVDIDL (280 aa). Glutamate 46 functions as the Proton acceptor in the catalytic mechanism. The active site involves lysine 128. Cysteine 163 (nucleophile) is an active-site residue.

It belongs to the carbon-nitrogen hydrolase superfamily. Nitrilase family. As to quaternary structure, oligomer of dimers, forming left-handed helical fibers with a diameter of 13 nm but with lengths ranging from approximately 1 um at the leading edge of the peak to having approximately the same length and diameter at the trailing edge.

The catalysed reaction is formamide = hydrogen cyanide + H2O. In terms of biological role, catalyzes the hydration of cyanide to formamide. Degradation of cyanide may be important for plant pathogenic fungi in infection of cyanogenic plants. This Neurospora crassa (strain ATCC 24698 / 74-OR23-1A / CBS 708.71 / DSM 1257 / FGSC 987) protein is Cyanide hydratase.